The sequence spans 499 residues: MEKQYVLAIDQGTTSSRAMLFDRQGKVAGVAQREFGQIFPQPGWVEHNPREIMTSVYTTITELLNNAQIDARAIAGIGITNQRETAVVWDKATGQPIYNAIVWQSRQTKDICAQLKEAGHEQMVRDKTGLLIDAYFSGTKVKWILDHVEGARERAQKGELAFGTIDSWLIWNLTGGKVHVTDYTNASRTMMFNIHTLQWDAELLAMLDVPAQMLPEVRSSSEVYGMTQTQYFYGEQVPIAGIAGDQQAALFGQACFEPGMAKNTYGTGCFMLMNTGDKAVASKAGLLTTIAWGIDGKVEYALEGAIFVAGSVVQWLRDGLRMLGKASDSQAYAERAGDNDGVYIVPAFVGLGAPYWRSDIRGAVFGLTRGTTKEHFVRAAVESMAYQTRDVLTAMQSDSGIELKELRADGGAIANDFMAQFQSDILNVPVLRPEVAETTALGAAYLAGLATGFWSSREEIAKQWAVDRRFEPAMADDKRQALYAGWQQAVEATMGFRIS.

Thr13 contributes to the ADP binding site. ATP-binding residues include Thr13, Thr14, and Ser15. Position 13 (Thr13) interacts with sn-glycerol 3-phosphate. An ADP-binding site is contributed by Arg17. Arg83, Glu84, Tyr135, and Asp245 together coordinate sn-glycerol 3-phosphate. Arg83, Glu84, Tyr135, Asp245, and Gln246 together coordinate glycerol. Residues Thr267 and Gly310 each contribute to the ADP site. The ATP site is built by Thr267, Gly310, Gln314, and Gly411. ADP-binding residues include Gly411 and Asn415.

This sequence belongs to the FGGY kinase family.

It catalyses the reaction glycerol + ATP = sn-glycerol 3-phosphate + ADP + H(+). The protein operates within polyol metabolism; glycerol degradation via glycerol kinase pathway; sn-glycerol 3-phosphate from glycerol: step 1/1. With respect to regulation, inhibited by fructose 1,6-bisphosphate (FBP). Its function is as follows. Key enzyme in the regulation of glycerol uptake and metabolism. Catalyzes the phosphorylation of glycerol to yield sn-glycerol 3-phosphate. This Xanthomonas axonopodis pv. citri (strain 306) protein is Glycerol kinase.